We begin with the raw amino-acid sequence, 315 residues long: Alpha- and gamma-adaptin-binding protein p34 (315 aa).

The segment at 197–234 (IGSADPCHPEQPHLPAADSTESLSDHRGGASNTTDAQV) is disordered. Residues Ser-310 and Ser-311 each carry the phosphoserine modification.

In terms of assembly, associated with AP-1 and AP-2 complexes. As to expression, widely expressed, including in skin and keratinocytes, with highest levels in adrenal gland, rectum and thymus.

The protein resides in the cytoplasm. It is found in the cytosol. May be involved in endocytic recycling of growth factor receptors such as EGFR. The chain is Alpha- and gamma-adaptin-binding protein p34 (AAGAB) from Homo sapiens (Human).